Consider the following 83-residue polypeptide: MKLDIVLIMFVTFSTTLAQHDEREEWYPFRFGNGHVGCSNRLGMSENDFCRKLCNQDGKWRNSKCKEHYCYCGPQRFYRVIKL.

An N-terminal signal peptide occupies residues 1–18; it reads MKLDIVLIMFVTFSTTLA.

Contains 3 disulfide bonds. Expressed by the venom gland.

It is found in the secreted. Reversibly inhibits potassium channels. This Tityus serrulatus (Brazilian scorpion) protein is Putative potassium channel toxin Ts20.